Consider the following 252-residue polypeptide: Proteasome subunit alpha 1 (252 aa).

The residue at position 1 (M1) is an N-acetylmethionine; alternate.

The protein belongs to the peptidase T1A family. As to quaternary structure, the 20S proteasome core is composed of 14 alpha and 14 beta subunits that assemble into four stacked heptameric rings, resulting in a barrel-shaped structure. The two inner rings, each composed of seven catalytic beta subunits, are sandwiched by two outer rings, each composed of seven alpha subunits. H.volcanii produces at least 2 types of 20S proteasomes: an alpha1-beta proteasome and a proteasome containing all three subunits (alpha1, alpha2, and beta) that appears to be asymmetrical with homo-oligomeric alpha1 and alpha2 rings positioned on separate ends. The catalytic chamber with the active sites is on the inside of the barrel. Has probably a gated structure, the ends of the cylinder being occluded by the N-termini of the alpha-subunits. Is likely capped at one or both ends by the proteasome regulatory ATPase, PAN. Acetylated. The acetylated form at Met-1 was shown to be in 100-fold excess of the unacetylated form with the initiator methionine removed in whole cells and purified 20S proteasomes.

Its subcellular location is the cytoplasm. The formation of the proteasomal ATPase PAN-20S proteasome complex, via the docking of the C-termini of PAN into the intersubunit pockets in the alpha-rings, triggers opening of the gate for substrate entry. Interconversion between the open-gate and close-gate conformations leads to a dynamic regulation of the 20S proteasome proteolysis activity. In vitro, the chymotrypsin-like activity of the alpha1-beta proteasome is potently inhibited by carbobenzoxyl-leucinyl-leucinyl-leucinal-H (MG132) and significantly by N-acetyl-leucinyl-leucinyl-norleucinal-H (calpain inhibitor I). Its function is as follows. Component of the proteasome core, a large protease complex with broad specificity involved in protein degradation. The H.volcanii alpha1-beta proteasome is able to cleave oligopeptides after Phe, Tyr and Trp, poorly after Glu but not after Arg. Thus, displays chymotrypsin-like activity, low caspase-like activity but no trypsin-like activity. The protein is Proteasome subunit alpha 1 of Haloferax volcanii (strain ATCC 29605 / DSM 3757 / JCM 8879 / NBRC 14742 / NCIMB 2012 / VKM B-1768 / DS2) (Halobacterium volcanii).